The chain runs to 361 residues: Peptide chain release factor 1 (361 aa).

Gln236 carries the post-translational modification N5-methylglutamine. The segment at 286-306 (AADSQRAEARKGQVGSGDRSE) is disordered.

It belongs to the prokaryotic/mitochondrial release factor family. In terms of processing, methylated by PrmC. Methylation increases the termination efficiency of RF1.

The protein localises to the cytoplasm. In terms of biological role, peptide chain release factor 1 directs the termination of translation in response to the peptide chain termination codons UAG and UAA. The polypeptide is Peptide chain release factor 1 (Magnetococcus marinus (strain ATCC BAA-1437 / JCM 17883 / MC-1)).